We begin with the raw amino-acid sequence, 233 residues long: Large ribosomal subunit protein uL1 (233 aa).

It belongs to the universal ribosomal protein uL1 family. Part of the 50S ribosomal subunit.

Its function is as follows. Binds directly to 23S rRNA. The L1 stalk is quite mobile in the ribosome, and is involved in E site tRNA release. Functionally, protein L1 is also a translational repressor protein, it controls the translation of the L11 operon by binding to its mRNA. This is Large ribosomal subunit protein uL1 from Aeromonas hydrophila subsp. hydrophila (strain ATCC 7966 / DSM 30187 / BCRC 13018 / CCUG 14551 / JCM 1027 / KCTC 2358 / NCIMB 9240 / NCTC 8049).